Consider the following 634-residue polypeptide: Chaperone protein HtpG (634 aa).

Residues 1 to 342 (MTVASHKETL…SNDLPLNISR (342 aa)) form an a; substrate-binding region. A b region spans residues 343-559 (EILQNNRVID…QHDMSGYLER (217 aa)). The c stretch occupies residues 560-634 (LLKEAGQQAP…LNSLLLAMAD (75 aa)).

The protein belongs to the heat shock protein 90 family. As to quaternary structure, homodimer.

Its subcellular location is the cytoplasm. In terms of biological role, molecular chaperone. Has ATPase activity. In Nitrosococcus oceani (strain ATCC 19707 / BCRC 17464 / JCM 30415 / NCIMB 11848 / C-107), this protein is Chaperone protein HtpG.